The primary structure comprises 329 residues: Beta-ketoacyl-[acyl-carrier-protein] synthase III (329 aa).

Active-site residues include Cys-113 and His-255. An ACP-binding region spans residues 256–260 (QANQR). Asn-285 is a catalytic residue.

The protein belongs to the thiolase-like superfamily. FabH family. Homodimer.

It is found in the cytoplasm. The enzyme catalyses malonyl-[ACP] + acetyl-CoA + H(+) = 3-oxobutanoyl-[ACP] + CO2 + CoA. Its pathway is lipid metabolism; fatty acid biosynthesis. Functionally, catalyzes the condensation reaction of fatty acid synthesis by the addition to an acyl acceptor of two carbons from malonyl-ACP. Catalyzes the first condensation reaction which initiates fatty acid synthesis and may therefore play a role in governing the total rate of fatty acid production. Possesses both acetoacetyl-ACP synthase and acetyl transacylase activities. Its substrate specificity determines the biosynthesis of branched-chain and/or straight-chain of fatty acids. The sequence is that of Beta-ketoacyl-[acyl-carrier-protein] synthase III from Chlorobium phaeobacteroides (strain DSM 266 / SMG 266 / 2430).